Here is a 183-residue protein sequence, read N- to C-terminus: Large ribosomal subunit protein uL6 (183 aa).

It belongs to the universal ribosomal protein uL6 family. As to quaternary structure, part of the 50S ribosomal subunit.

Functionally, this protein binds to the 23S rRNA, and is important in its secondary structure. It is located near the subunit interface in the base of the L7/L12 stalk, and near the tRNA binding site of the peptidyltransferase center. This chain is Large ribosomal subunit protein uL6, found in Chlamydia trachomatis serovar D (strain ATCC VR-885 / DSM 19411 / UW-3/Cx).